A 635-amino-acid polypeptide reads, in one-letter code: Biosynthetic arginine decarboxylase (635 aa).

Residue Lys-100 is modified to N6-(pyridoxal phosphate)lysine. 282 to 292 contributes to the substrate binding site; sequence LDIGGGLGVDY.

This sequence belongs to the Orn/Lys/Arg decarboxylase class-II family. SpeA subfamily. Requires Mg(2+) as cofactor. The cofactor is pyridoxal 5'-phosphate.

It catalyses the reaction L-arginine + H(+) = agmatine + CO2. The protein operates within amine and polyamine biosynthesis; agmatine biosynthesis; agmatine from L-arginine: step 1/1. Its function is as follows. Catalyzes the biosynthesis of agmatine from arginine. This Trichlorobacter lovleyi (strain ATCC BAA-1151 / DSM 17278 / SZ) (Geobacter lovleyi) protein is Biosynthetic arginine decarboxylase.